We begin with the raw amino-acid sequence, 167 residues long: Ribosome maturation factor RimM (167 aa).

The 73-residue stretch at 94–166 folds into the PRC barrel domain; it reads QNRAWLHELE…YIVVPRFDEF (73 aa).

This sequence belongs to the RimM family. In terms of assembly, binds ribosomal protein uS19.

Its subcellular location is the cytoplasm. An accessory protein needed during the final step in the assembly of 30S ribosomal subunit, possibly for assembly of the head region. Essential for efficient processing of 16S rRNA. May be needed both before and after RbfA during the maturation of 16S rRNA. It has affinity for free ribosomal 30S subunits but not for 70S ribosomes. This chain is Ribosome maturation factor RimM, found in Chlorobium phaeovibrioides (strain DSM 265 / 1930) (Prosthecochloris vibrioformis (strain DSM 265)).